We begin with the raw amino-acid sequence, 201 residues long: Putative 3-methyladenine DNA glycosylase (201 aa).

This sequence belongs to the DNA glycosylase MPG family.

This chain is Putative 3-methyladenine DNA glycosylase, found in Clostridium novyi (strain NT).